A 275-amino-acid polypeptide reads, in one-letter code: AA9 family lytic polysaccharide monooxygenase D (275 aa).

The signal sequence occupies residues 1–17 (MKLSLLAIAAIAPFVSA). Cu(2+) contacts are provided by histidine 18 and histidine 101. Cysteines 67 and 189 form a disulfide. O2 is bound at residue histidine 176. Tyrosine 186 lines the Cu(2+) pocket. Residue asparagine 220 is glycosylated (N-linked (GlcNAc...) asparagine).

It belongs to the polysaccharide monooxygenase AA9 family. Cu(2+) serves as cofactor.

The protein localises to the secreted. It carries out the reaction [(1-&gt;4)-beta-D-glucosyl]n+m + reduced acceptor + O2 = 4-dehydro-beta-D-glucosyl-[(1-&gt;4)-beta-D-glucosyl]n-1 + [(1-&gt;4)-beta-D-glucosyl]m + acceptor + H2O.. In terms of biological role, lytic polysaccharide monooxygenase (LPMO) that depolymerizes crystalline and amorphous polysaccharides via the oxidation of scissile alpha- or beta-(1-4)-glycosidic bonds, yielding C1 or C4 oxidation products. Catalysis by LPMOs requires the reduction of the active-site copper from Cu(II) to Cu(I) by a reducing agent and H(2)O(2) or O(2) as a cosubstrate. This chain is AA9 family lytic polysaccharide monooxygenase D, found in Aspergillus tamarii.